The chain runs to 211 residues: MGGRFIVFEGVEGCGKTSQMQLCAEWLQNLGISVILTREPGGTELGVDLRRLLLQKAEDKPIAEVTELLLYAADRAQHVAQELKPKLAQGKYILCDRYVDSTIAYQGYGRNLDMNLIHQLNDIATGGLTSDITIWLDVDVEVGLARKRGENVGLDRIEQETIAFHRRVQQGYANLAASSPSRIIRVDGQLSKETVHKTIQEILSPHLKEWL.

Residue glycine 10–threonine 17 participates in ATP binding.

It belongs to the thymidylate kinase family.

The enzyme catalyses dTMP + ATP = dTDP + ADP. In terms of biological role, phosphorylation of dTMP to form dTDP in both de novo and salvage pathways of dTTP synthesis. This Trichormus variabilis (strain ATCC 29413 / PCC 7937) (Anabaena variabilis) protein is Thymidylate kinase.